Reading from the N-terminus, the 650-residue chain is Threonine--tRNA ligase, chloroplastic/mitochondrial 2 (650 aa).

Zn(2+) contacts are provided by C347, H398, and H524.

This sequence belongs to the class-II aminoacyl-tRNA synthetase family.

Its subcellular location is the plastid. The protein resides in the chloroplast. It localises to the mitochondrion. The enzyme catalyses tRNA(Thr) + L-threonine + ATP = L-threonyl-tRNA(Thr) + AMP + diphosphate + H(+). This is Threonine--tRNA ligase, chloroplastic/mitochondrial 2 from Arabidopsis thaliana (Mouse-ear cress).